The sequence spans 241 residues: Small ribosomal subunit protein uS2 (241 aa).

The protein belongs to the universal ribosomal protein uS2 family.

In Citrobacter koseri (strain ATCC BAA-895 / CDC 4225-83 / SGSC4696), this protein is Small ribosomal subunit protein uS2.